The primary structure comprises 172 residues: Large ribosomal subunit protein uL10 (172 aa).

The protein belongs to the universal ribosomal protein uL10 family. In terms of assembly, part of the ribosomal stalk of the 50S ribosomal subunit. The N-terminus interacts with L11 and the large rRNA to form the base of the stalk. The C-terminus forms an elongated spine to which L12 dimers bind in a sequential fashion forming a multimeric L10(L12)X complex.

Functionally, forms part of the ribosomal stalk, playing a central role in the interaction of the ribosome with GTP-bound translation factors. This chain is Large ribosomal subunit protein uL10, found in Nitrobacter winogradskyi (strain ATCC 25391 / DSM 10237 / CIP 104748 / NCIMB 11846 / Nb-255).